The primary structure comprises 341 residues: tRNA N6-adenosine threonylcarbamoyltransferase (341 aa).

Residues His-111 and His-115 each contribute to the Fe cation site. Residues 134–138 (LVSGG), Asp-167, Gly-180, and Asn-276 contribute to the substrate site. Residue Asp-304 participates in Fe cation binding.

This sequence belongs to the KAE1 / TsaD family. The cofactor is Fe(2+).

It is found in the cytoplasm. It catalyses the reaction L-threonylcarbamoyladenylate + adenosine(37) in tRNA = N(6)-L-threonylcarbamoyladenosine(37) in tRNA + AMP + H(+). Functionally, required for the formation of a threonylcarbamoyl group on adenosine at position 37 (t(6)A37) in tRNAs that read codons beginning with adenine. Is involved in the transfer of the threonylcarbamoyl moiety of threonylcarbamoyl-AMP (TC-AMP) to the N6 group of A37, together with TsaE and TsaB. TsaD likely plays a direct catalytic role in this reaction. The polypeptide is tRNA N6-adenosine threonylcarbamoyltransferase (Pseudomonas paraeruginosa (strain DSM 24068 / PA7) (Pseudomonas aeruginosa (strain PA7))).